Reading from the N-terminus, the 255-residue chain is Increased copper sensitivity protein 2 (255 aa).

A compositionally biased stretch (basic and acidic residues) spans 1 to 12 (MGKFEQKERERI). 2 disordered regions span residues 1-32 (MGKFEQKERERISTFSFPTTGSQSSTSIKSLG) and 82-142 (PGDK…RKSH). Polar residues predominate over residues 13–30 (STFSFPTTGSQSSTSIKS). Residues 131–142 (SGRRKSYHRKSH) are compositionally biased toward basic residues. Ser-217 carries the phosphoserine modification.

The sequence is that of Increased copper sensitivity protein 2 (ICS2) from Saccharomyces cerevisiae (strain ATCC 204508 / S288c) (Baker's yeast).